The primary structure comprises 353 residues: Ubiquinol oxidase 1, mitochondrial (353 aa).

Residues 1-69 (MMTRGATRMT…RHFPVMGSRS (69 aa)) constitute a mitochondrion transit peptide. The disordered stretch occupies residues 77-99 (DKQHDKKAENGSAAATGGGDGGD). The helical transmembrane segment at 178-198 (AMMLETVAAVPGMVGGMLLHC) threads the bilayer. 3 residues coordinate Fe cation: E182, E221, and H224. The chain crosses the membrane as a helical span at residues 240-260 (ALVFAVQGVFFNAYFVTYLLS). Fe cation is bound by residues E272, E323, and H326.

The protein belongs to the alternative oxidase family. Homodimer; disulfide-linked. Fe cation serves as cofactor.

The protein resides in the mitochondrion inner membrane. It carries out the reaction 2 a ubiquinol + O2 = 2 a ubiquinone + 2 H2O. Stimulated by reduction of the disulfide bond and the presence of pyruvate. Catalyzes the cyanide-resistant oxidation of ubiquinol and the reduction of molecular oxygen to water, but does not translocate protons and consequently is not linked to oxidative phosphorylation. May increase respiration when the cytochrome respiratory pathway is restricted, or in response to low temperatures. In Nicotiana tabacum (Common tobacco), this protein is Ubiquinol oxidase 1, mitochondrial (AOX1).